The chain runs to 826 residues: (2S)-3-sulfopropanediol dehydratase (826 aa).

The PFL domain maps to 33 to 695 (PRVNRLRQAF…NTNASIDGRK (663 aa)). The Cysteine radical intermediate role is filled by Cys464. The Proton acceptor role is filled by Glu466. The 121-residue stretch at 706–826 (PVHTDGGSHD…DLIQRTELHF (121 aa)) folds into the Glycine radical domain. Glycine radical is present on Gly802.

This sequence belongs to the glycyl radical enzyme (GRE) family. Post-translationally, requires the activating protein HpfH to generate the key active site glycyl radical on Gly-802 that is involved in catalysis.

It carries out the reaction (2S)-3-sulfopropanediol = 3-oxopropane-1-sulfonate + H2O. It functions in the pathway organosulfur degradation; alkanesulfonate degradation. In terms of biological role, involved in the degradation of the organosulfur compound 2(S)-dihydroxypropanesulfonate (DHPS). Catalyzes the radical-mediated dehydration of DHPS to produce 3-sulfopropionaldehyde (3-oxopropane-1-sulfonate). This chain is (2S)-3-sulfopropanediol dehydratase, found in Klebsiella oxytoca.